A 687-amino-acid polypeptide reads, in one-letter code: UvrABC system protein C (687 aa).

A GIY-YIG domain is found at 16-95 (TEPGVYKFRD…IKKFDPHFNV (80 aa)). The UVR domain maps to 208 to 243 (DSVVRRLTNEMISASEALDFEKAARKRDDLNAVRKI).

This sequence belongs to the UvrC family. Interacts with UvrB in an incision complex.

It localises to the cytoplasm. The UvrABC repair system catalyzes the recognition and processing of DNA lesions. UvrC both incises the 5' and 3' sides of the lesion. The N-terminal half is responsible for the 3' incision and the C-terminal half is responsible for the 5' incision. The protein is UvrABC system protein C of Corynebacterium diphtheriae (strain ATCC 700971 / NCTC 13129 / Biotype gravis).